A 1175-amino-acid polypeptide reads, in one-letter code: Pyruvate carboxylase 1 (1175 aa).

The 451-residue stretch at 31–481 (EFNKVMVANR…DTYFIDEHPE (451 aa)) folds into the Biotin carboxylation domain. 3 residues coordinate ATP: lysine 147, glutamate 231, and histidine 266. The ATP-grasp domain occupies 151-348 (RQAAIEAGVQ…LVQAQIRIAE (198 aa)). The active site involves arginine 323. In terms of domain architecture, Pyruvate carboxyltransferase spans 559–828 (CMITDTTFRD…DTGLSLDDIS (270 aa)). Residues 567 to 571 (RDAHQ) and arginine 640 each bind substrate. Aspartate 568 is an a divalent metal cation binding site. Residues lysine 737, histidine 767, and histidine 769 each coordinate a divalent metal cation. Lysine 737 is modified (N6-carboxylysine). Threonine 904 serves as a coordination point for substrate. In terms of domain architecture, Biotinyl-binding spans 1099–1174 (RALPGVRGHI…SAGDLVVEVE (76 aa)). Lysine 1140 bears the N6-biotinyllysine mark.

In terms of assembly, interacts with sir-2.2 and sir-2.3. It depends on biotin as a cofactor. Zn(2+) serves as cofactor.

The protein resides in the cytoplasm. The catalysed reaction is hydrogencarbonate + pyruvate + ATP = oxaloacetate + ADP + phosphate + H(+). Its pathway is carbohydrate biosynthesis; gluconeogenesis. Functionally, pyruvate carboxylase catalyzes a 2-step reaction, involving the ATP-dependent carboxylation of the covalently attached biotin in the first step and the transfer of the carboxyl group to pyruvate in the second. The chain is Pyruvate carboxylase 1 from Caenorhabditis elegans.